Reading from the N-terminus, the 478-residue chain is Proline--tRNA ligase (478 aa).

This sequence belongs to the class-II aminoacyl-tRNA synthetase family. ProS type 3 subfamily. Homodimer.

The protein resides in the cytoplasm. The catalysed reaction is tRNA(Pro) + L-proline + ATP = L-prolyl-tRNA(Pro) + AMP + diphosphate. Its function is as follows. Catalyzes the attachment of proline to tRNA(Pro) in a two-step reaction: proline is first activated by ATP to form Pro-AMP and then transferred to the acceptor end of tRNA(Pro). The chain is Proline--tRNA ligase from Clostridium botulinum (strain Kyoto / Type A2).